Here is a 440-residue protein sequence, read N- to C-terminus: Alpha-methylserine aldolase (440 aa).

Residue Lys-255 is modified to N6-(pyridoxal phosphate)lysine.

Belongs to the SHMT family. Alpha-methylserine aldolase subfamily. Homodimer. The cofactor is pyridoxal 5'-phosphate.

The enzyme catalyses 2-methyl-L-serine = formaldehyde + L-alanine. It catalyses the reaction 2-ethyl-L-serine = (2S)-2-aminobutanoate + formaldehyde. In the alpha-methyl-L-serine synthesis reaction, activity is inhibited by an excess amount of formaldehyde (at a concentration greater than 4 mM). Formaldehyde release activity is reduced by the sulfhydryl reagent N-ethylmaleimide, iodoacetate amide and iodoacetic acid, but not by dithiothreitol and 2-mercaptoethanol. Activity is enhanced by 1 mM of manganese chloride. Functionally, catalyzes the reversible interconversion of alpha-methyl-L-serine to L-alanine and formaldehyde. Can also catalyze the synthesis of alpha-ethyl-L-serine from L-2-aminobutyric acid and formaldehyde. Also shows low alanine racemase activity. Cannot use alpha-methyl-D-serine, L-serine, D-serine, (S)-2-amino-1-propanol, (R)-2-amino-1-propanol, (S)-alpha-hydroxymethyltyrosine, (R)-alpha-hydroxymethyltyrosine, alpha-iso-butyl-DL-serine, alpha-iso-propyl-DL-serine or alpha-benzyl-DL-serine. Cannot use D-alanine instead of L-alanine as the substrate for alpha-methyl-L-serine synthesis. Does not require tetrahydrofolate (THF) for activity. The polypeptide is Alpha-methylserine aldolase (Variovorax paradoxus).